A 600-amino-acid chain; its full sequence is Prostaglandin G/H synthase 1 (600 aa).

An N-terminal signal peptide occupies residues 1–24; sequence MSRQGISLRFPLLLLLLSPSPVLP. The EGF-like domain occupies 32–70; sequence PVNPCCYYPCQHQGICVRFGLDRYQCDCTRTGYYGPNCT. 4 cysteine pairs are disulfide-bonded: Cys36–Cys47, Cys37–Cys159, Cys41–Cys57, and Cys59–Cys69. 3 N-linked (GlcNAc...) asparagine glycosylation sites follow: Asn68, Asn104, and Asn144. His207 functions as the Proton acceptor in the catalytic mechanism. Residue Tyr385 is the For cyclooxygenase activity of the active site. Position 388 (His388) interacts with heme b. The N-linked (GlcNAc...) asparagine glycan is linked to Asn410. Cys569 and Cys575 are joined by a disulfide.

This sequence belongs to the prostaglandin G/H synthase family. In terms of assembly, homodimer. Requires heme b as cofactor.

The protein localises to the microsome membrane. It is found in the endoplasmic reticulum membrane. The catalysed reaction is (5Z,8Z,11Z,14Z)-eicosatetraenoate + AH2 + 2 O2 = prostaglandin H2 + A + H2O. It catalyses the reaction (5Z,8Z,11Z,14Z)-eicosatetraenoate + 2 O2 = prostaglandin G2. It carries out the reaction prostaglandin G2 + AH2 = prostaglandin H2 + A + H2O. The enzyme catalyses (9Z,12Z)-octadecadienoate + AH2 + O2 = (9R)-hydroxy-(10E,12Z)-octadecadienoate + A + H2O. The catalysed reaction is (9Z,12Z)-octadecadienoate + AH2 + O2 = (9S)-hydroxy-(10E,12Z)-octadecadienoate + A + H2O. It catalyses the reaction (9Z,12Z)-octadecadienoate + AH2 + O2 = (13S)-hydroxy-(9Z,11E)-octadecadienoate + A + H2O. It carries out the reaction (9Z,12Z)-octadecadienoate + AH2 + O2 = (13R)-hydroxy-(9Z,11E)-octadecadienoate + A + H2O. It participates in lipid metabolism; prostaglandin biosynthesis. The cyclooxygenase activity is inhibited by nonsteroidal anti-inflammatory drugs (NSAIDs) including ibuprofen, flurbiprofen, ketoprofen, naproxen, flurbiprofen, anirolac, fenclofenac and diclofenac. In terms of biological role, dual cyclooxygenase and peroxidase that plays an important role in the biosynthesis pathway of prostanoids, a class of C20 oxylipins mainly derived from arachidonate ((5Z,8Z,11Z,14Z)-eicosatetraenoate, AA, C20:4(n-6)), with a particular role in the inflammatory response. The cyclooxygenase activity oxygenates AA to the hydroperoxy endoperoxide prostaglandin G2 (PGG2), and the peroxidase activity reduces PGG2 to the hydroxy endoperoxide prostaglandin H2 (PGH2), the precursor of all 2-series prostaglandins and thromboxanes. This complex transformation is initiated by abstraction of hydrogen at carbon 13 (with S-stereochemistry), followed by insertion of molecular O2 to form the endoperoxide bridge between carbon 9 and 11 that defines prostaglandins. The insertion of a second molecule of O2 (bis-oxygenase activity) yields a hydroperoxy group in PGG2 that is then reduced to PGH2 by two electrons. Involved in the constitutive production of prostanoids in particular in the stomach and platelets. In gastric epithelial cells, it is a key step in the generation of prostaglandins, such as prostaglandin E2 (PGE2), which plays an important role in cytoprotection. In platelets, it is involved in the generation of thromboxane A2 (TXA2), which promotes platelet activation and aggregation, vasoconstriction and proliferation of vascular smooth muscle cells. Can also use linoleate (LA, (9Z,12Z)-octadecadienoate, C18:2(n-6)) as substrate and produce hydroxyoctadecadienoates (HODEs) in a regio- and stereospecific manner, being (9R)-HODE ((9R)-hydroxy-(10E,12Z)-octadecadienoate) and (13S)-HODE ((13S)-hydroxy-(9Z,11E)-octadecadienoate) its major products. The polypeptide is Prostaglandin G/H synthase 1 (PTGS1) (Bos taurus (Bovine)).